A 196-amino-acid polypeptide reads, in one-letter code: Imidazoleglycerol-phosphate dehydratase (196 aa).

This sequence belongs to the imidazoleglycerol-phosphate dehydratase family.

The protein resides in the cytoplasm. The catalysed reaction is D-erythro-1-(imidazol-4-yl)glycerol 3-phosphate = 3-(imidazol-4-yl)-2-oxopropyl phosphate + H2O. It functions in the pathway amino-acid biosynthesis; L-histidine biosynthesis; L-histidine from 5-phospho-alpha-D-ribose 1-diphosphate: step 6/9. This is Imidazoleglycerol-phosphate dehydratase from Caulobacter sp. (strain K31).